The chain runs to 260 residues: Metallo-beta-lactamase domain-containing protein 1 (260 aa).

7 residues coordinate Zn(2+): His118, His120, Asp122, His123, His173, Asp196, and His235.

This sequence belongs to the metallo-beta-lactamase superfamily. Glyoxalase II family. In terms of assembly, homodimer. Zn(2+) serves as cofactor.

It is found in the cytoplasm. It localises to the cytosol. Its subcellular location is the nucleus. It carries out the reaction a ribonucleotidyl-ribonucleotide-RNA + H2O = a 3'-end ribonucleotide-RNA + a 5'-end 5'-phospho-ribonucleoside-RNA + H(+). In terms of biological role, endoribonuclease that catalyzes the hydrolysis of histone-coding pre-mRNA 3'-end. Involved in histone pre-mRNA processing during the S-phase of the cell cycle, which is required for entering/progressing through S-phase. Cleaves histone pre-mRNA at a major and a minor cleavage site after the 5'-ACCCA-3' and the 5'-ACCCACA-3' sequence, respectively, and located downstream of the stem-loop. May require the presence of the HDE element located at the histone pre-RNA 3'-end to avoid non-specific cleavage. The polypeptide is Metallo-beta-lactamase domain-containing protein 1 (Mus musculus (Mouse)).